A 562-amino-acid polypeptide reads, in one-letter code: UPF0649 protein C1442.02 (562 aa).

A phosphoserine mark is found at Ser285 and Ser286. The tract at residues 288–308 is disordered; it reads DEEIAKNADVPAEVDNNSTKA.

Belongs to the UPF0649 family.

The protein resides in the cytoplasm. Its subcellular location is the nucleus. The polypeptide is UPF0649 protein C1442.02 (Schizosaccharomyces pombe (strain 972 / ATCC 24843) (Fission yeast)).